The primary structure comprises 168 residues: Ribosome maturation factor RimM (168 aa).

The PRC barrel domain occupies 96–168; it reads KDEYYWGDLV…RIRVAWQKDW (73 aa).

Belongs to the RimM family. In terms of assembly, binds ribosomal protein uS19.

It is found in the cytoplasm. Functionally, an accessory protein needed during the final step in the assembly of 30S ribosomal subunit, possibly for assembly of the head region. Essential for efficient processing of 16S rRNA. May be needed both before and after RbfA during the maturation of 16S rRNA. It has affinity for free ribosomal 30S subunits but not for 70S ribosomes. This chain is Ribosome maturation factor RimM, found in Azoarcus sp. (strain BH72).